Consider the following 180-residue polypeptide: MHNLLSRANSLLAFTLWVMAAVTAACFLSTVFLDYTVSNHLEVNDIKIRNVRDYATDDKQADLATLAFNLKVDFSRLFNWNVKQLFVYLVAEYKSAENAVNQVVIWDRIVERAERVVMDEIGVKTKYYFLDDGAHLLKHDNVTFVLRYNVIPNAGYLRLVQSTNQLVVPFPTTYTTTRRS.

The Cytoplasmic segment spans residues 1 to 12 (MHNLLSRANSLL). Residues 13–33 (AFTLWVMAAVTAACFLSTVFL) traverse the membrane as a helical; Signal-anchor for type II membrane protein segment. The Lumenal portion of the chain corresponds to 34-180 (DYTVSNHLEV…PTTYTTTRRS (147 aa)). Asn-141 carries N-linked (GlcNAc...) asparagine glycosylation.

This sequence belongs to the SPCS3 family. Component of the signal peptidase complex (SPC) composed of a catalytic subunit sec-11 and three accessory subunits spcs-1, spcs-2 and spcs-3. The complex induces a local thinning of the ER membrane which is used to measure the length of the signal peptide (SP) h-region of protein substrates. This ensures the selectivity of the complex towards h-regions shorter than 18-20 amino acids.

The protein localises to the endoplasmic reticulum membrane. Its function is as follows. Essential component of the signal peptidase complex (SPC) which catalyzes the cleavage of N-terminal signal sequences from nascent proteins as they are translocated into the lumen of the endoplasmic reticulum. Essential for the SPC catalytic activity, possibly by stabilizing and positioning the active center of the complex close to the lumenal surface. This is Signal peptidase complex subunit 3 from Caenorhabditis briggsae.